The following is a 253-amino-acid chain: Mediator of RNA polymerase II transcription subunit 10 (253 aa).

3 disordered regions span residues 32 to 63 (YDTN…HASS), 88 to 109 (LPSS…TELE), and 206 to 253 (VEAT…QSGQ). Over residues 34-47 (TNPSSSNNNTPTSS) the composition is skewed to low complexity. A compositionally biased stretch (gly residues) spans 50 to 60 (SGGGGGGGGGH). Residues 88-104 (LPSSPSSGPSNNQPQQG) are compositionally biased toward low complexity. The span at 231–253 (SAGGEGQQGQGQGQQGQGQQSGQ) shows a compositional bias: gly residues.

This sequence belongs to the Mediator complex subunit 10 family. In terms of assembly, component of the Mediator complex.

It is found in the nucleus. Its function is as follows. Component of the Mediator complex, a coactivator involved in the regulated transcription of nearly all RNA polymerase II-dependent genes. Mediator functions as a bridge to convey information from gene-specific regulatory proteins to the basal RNA polymerase II transcription machinery. Mediator is recruited to promoters by direct interactions with regulatory proteins and serves as a scaffold for the assembly of a functional preinitiation complex with RNA polymerase II and the general transcription factors. This Neurospora crassa (strain ATCC 24698 / 74-OR23-1A / CBS 708.71 / DSM 1257 / FGSC 987) protein is Mediator of RNA polymerase II transcription subunit 10 (nut2).